The primary structure comprises 94 residues: Large ribosomal subunit protein bL27 (94 aa).

A propeptide spanning residues 1-9 (MLKLNLQFF) is cleaved from the precursor. Positions 12–32 (KKGVSSTKNGRDSESKRLGAK) are disordered. Residues 20–32 (NGRDSESKRLGAK) show a composition bias toward basic and acidic residues.

Belongs to the bacterial ribosomal protein bL27 family. In terms of processing, the N-terminus is cleaved by ribosomal processing cysteine protease Prp.

The sequence is that of Large ribosomal subunit protein bL27 from Staphylococcus carnosus (strain TM300).